Reading from the N-terminus, the 430-residue chain is Purine nucleoside phosphorylase LACC1 (430 aa).

The residue at position 247 (lysine 247) is an N6-acetyllysine. The Zn(2+) site is built by histidine 250, cysteine 284, and histidine 301.

It belongs to the purine nucleoside phosphorylase YfiH/LACC1 family. Interacts with FASN. Interacts with SDHA. Interacts with ATF6, EIF2AK3 and ERN1. Phosphorylated on tyrosine residues. As to expression, ubiquitously expressed, with higher expression levels in immune-related tissues such as lymph nodes and spleen. Expressed in both intestinal and peripheral myeloid-derived cells.

The protein localises to the cytoplasm. It localises to the nucleus. Its subcellular location is the endoplasmic reticulum. It is found in the peroxisome. The enzyme catalyses adenosine + phosphate = alpha-D-ribose 1-phosphate + adenine. It catalyses the reaction inosine + phosphate = alpha-D-ribose 1-phosphate + hypoxanthine. It carries out the reaction guanosine + phosphate = alpha-D-ribose 1-phosphate + guanine. The catalysed reaction is S-methyl-5'-thioadenosine + phosphate = 5-(methylsulfanyl)-alpha-D-ribose 1-phosphate + adenine. The enzyme catalyses adenosine + H2O + H(+) = inosine + NH4(+). Its function is as follows. Purine nucleoside enzyme that catalyzes the phosphorolysis of adenosine, guanosine and inosine nucleosides, yielding D-ribose 1-phosphate and the respective free bases, adenine, guanine and hypoxanthine. Also catalyzes the phosphorolysis of S-methyl-5'-thioadenosine into adenine and S-methyl-5-thio-alpha-D-ribose 1-phosphate. Also has adenosine deaminase activity. Acts as a regulator of innate immunity in macrophages by modulating the purine nucleotide metabolism, thereby regulating the metabolic function and bioenergetic state of macrophages. Enables a purine nucleotide cycle between adenosine and inosine monophosphate and adenylosuccinate that prevents cytoplasmic acidification and balances the cytoplasmic-mitochondrial redox interface. The purine nucleotide cycle consumes aspartate and releases fumarate in a manner involving fatty acid oxidation and ATP-citrate lyase activity. Participates in pattern recognition receptor (PRR)-induced cytokines in macrophages: associates with the NOD2-signaling complex and promotes optimal NOD2-induced signaling, cytokine secretion and bacterial clearance. Localizes to the endoplasmic reticulum upon PRR stimulation of macrophages and associates with endoplasmic reticulum-stress sensors, promoting the endoplasmic reticulum unfolded protein response (UPR). Does not show laccase activity. The sequence is that of Purine nucleoside phosphorylase LACC1 from Homo sapiens (Human).